The primary structure comprises 180 residues: Large ribosomal subunit protein uL6 (180 aa).

The protein belongs to the universal ribosomal protein uL6 family. In terms of assembly, part of the 50S ribosomal subunit.

This protein binds to the 23S rRNA, and is important in its secondary structure. It is located near the subunit interface in the base of the L7/L12 stalk, and near the tRNA binding site of the peptidyltransferase center. The sequence is that of Large ribosomal subunit protein uL6 from Borrelia recurrentis (strain A1).